A 405-amino-acid polypeptide reads, in one-letter code: Secreted aspartic protease 8 (405 aa).

Residues 1–25 form the signal peptide; the sequence is MVSIITFTKNVLVTLAFALLAQGLA. Asparagine 50 carries an N-linked (GlcNAc...) asparagine glycan. Residues 52–78 form a disordered region; the sequence is TAHGQHHQSQQQQQQQQQQPAQKRGTV. Low complexity predominate over residues 58-70; the sequence is HQSQQQQQQQQQQ. A Peptidase A1 domain is found at 89–392; that stretch reads YAATITVGSN…DLDGNTISLA (304 aa). Residue aspartate 107 is part of the active site. Residue 107–109 participates in pepstatin A binding; that stretch reads DTG. A disulfide bridge connects residues cysteine 122 and cysteine 134. Aspartate 292 is an active-site residue. Residue 292–296 participates in pepstatin A binding; the sequence is DSGTT. The cysteines at positions 327 and 358 are disulfide-linked.

Belongs to the peptidase A1 family. Monomer.

It is found in the secreted. The catalysed reaction is Preferential cleavage at the carboxyl of hydrophobic amino acids, but fails to cleave 15-Leu-|-Tyr-16, 16-Tyr-|-Leu-17 and 24-Phe-|-Phe-25 of insulin B chain. Activates trypsinogen, and degrades keratin.. Functionally, secreted aspartic peptidases (SAPs) are a group of ten acidic hydrolases considered as key virulence factors. These enzymes supply the fungus with nutrient amino acids as well as are able to degrade the selected host's proteins involved in the immune defense. Moreover, acts toward human hemoglobin though limited proteolysis to generate a variety of antimicrobial hemocidins, enabling to compete with the other microorganisms of the same physiological niche using the microbicidal peptides generated from the host protein. Its function is as follows. Plays a key role in defense against host by cleaving histatin-5 (Hst 5), a peptide from human saliva that carries out fungicidal activity. The cleavage rate decreases in an order of SAP2 &gt; SAP9 &gt; SAP3 &gt; SAP7 &gt; SAP4 &gt; SAP1 &gt; SAP8. The hydrolysis of Hst 5 by SAP8 causes production of the DSHAKRHHGY, HHSHRGY and FHEKHHSHRGY peptides. The polypeptide is Secreted aspartic protease 8 (Candida albicans (Yeast)).